The primary structure comprises 174 residues: MPLRPARCYTHFSGPPYTRREYIPGVPQPKIVKFEMGNVHGDYDYRAELVMIEAGQIRHNALEAARVMANKYLSSTVGDQNYFLKIRVYPHHVLRENKMMAFAGADRLQDGMRQAFGKPIGTAARVYPGTIVMEVRVRKEHVEHAKEALRRAASKLPLPARIVFKPLKPGLKPI.

This sequence belongs to the universal ribosomal protein uL16 family.

This is Large ribosomal subunit protein uL16 from Staphylothermus marinus (strain ATCC 43588 / DSM 3639 / JCM 9404 / F1).